The chain runs to 536 residues: Cytochrome P450 78A7 (536 aa).

A helical transmembrane segment spans residues 36 to 56; sequence LFLAVVFLSIVTWALAGGGGV. Cysteine 481 lines the heme pocket.

This sequence belongs to the cytochrome P450 family. Heme serves as cofactor.

It localises to the membrane. Functionally, functions probably in association with CYP78A5 in regulating relative growth of the shoot apical meristem and plant organs via a non-cell-autonomous signal. The protein is Cytochrome P450 78A7 (CYP78A7) of Arabidopsis thaliana (Mouse-ear cress).